The following is a 141-amino-acid chain: Nucleoside diphosphate kinase (141 aa).

Positions 11, 59, 87, 93, 104, and 114 each coordinate ATP.

It belongs to the NDK family. In terms of assembly, homotetramer. It depends on Mg(2+) as a cofactor.

The protein resides in the cytoplasm. It catalyses the reaction a 2'-deoxyribonucleoside 5'-diphosphate + ATP = a 2'-deoxyribonucleoside 5'-triphosphate + ADP. The catalysed reaction is a ribonucleoside 5'-diphosphate + ATP = a ribonucleoside 5'-triphosphate + ADP. Functionally, major role in the synthesis of nucleoside triphosphates other than ATP. The ATP gamma phosphate is transferred to the NDP beta phosphate via a ping-pong mechanism, using a phosphorylated active-site intermediate. The chain is Nucleoside diphosphate kinase from Saccharophagus degradans (strain 2-40 / ATCC 43961 / DSM 17024).